Consider the following 121-residue polypeptide: Small ribosomal subunit protein uS13 (121 aa).

The tract at residues 91-121 (HRKGLPVRGQRTRTNARTRKGKKKTVAGKKK) is disordered.

It belongs to the universal ribosomal protein uS13 family. As to quaternary structure, part of the 30S ribosomal subunit. Forms a loose heterodimer with protein S19. Forms two bridges to the 50S subunit in the 70S ribosome.

Functionally, located at the top of the head of the 30S subunit, it contacts several helices of the 16S rRNA. In the 70S ribosome it contacts the 23S rRNA (bridge B1a) and protein L5 of the 50S subunit (bridge B1b), connecting the 2 subunits; these bridges are implicated in subunit movement. Contacts the tRNAs in the A and P-sites. This is Small ribosomal subunit protein uS13 from Treponema denticola (strain ATCC 35405 / DSM 14222 / CIP 103919 / JCM 8153 / KCTC 15104).